A 258-amino-acid polypeptide reads, in one-letter code: Glucanase inhibitor protein 1 (258 aa).

The signal sequence occupies residues 1 to 19; the sequence is MRVVPTLAAASLALGAVAG. The 228-residue stretch at 27-254 folds into the Peptidase S1 domain; it reads ILGGGEVPIG…AIEWITSVTK (228 aa). Residues cysteine 54 and cysteine 70 are joined by a disulfide bond. Residues asparagine 87, asparagine 102, asparagine 107, asparagine 157, and asparagine 185 are each glycosylated (N-linked (GlcNAc...) asparagine). 2 disulfides stabilise this stretch: cysteine 177-cysteine 189 and cysteine 199-cysteine 230.

This sequence belongs to the peptidase S1 family. Forms an apoplastic complex with host endoglucanases in tomato leaves during P.infestans infection.

The protein localises to the secreted. In terms of biological role, secreted effector that suppresses host plant glucan elicitor-mediated defense responses. Targets host endoglucanases and inhibits the endoglucanase-mediated release of elicitor-active glucan oligosaccharides from P.infestans cell walls. This Phytophthora infestans (Potato late blight agent) protein is Glucanase inhibitor protein 1.